Consider the following 465-residue polypeptide: Cysteine--tRNA ligase (465 aa).

Zn(2+) is bound at residue C27. The 'HIGH' region signature appears at P29–H39. The Zn(2+) site is built by C207, H237, and E241. The 'KMSKS' region motif lies at K269–S273. K272 is an ATP binding site.

The protein belongs to the class-I aminoacyl-tRNA synthetase family. As to quaternary structure, monomer. Zn(2+) serves as cofactor.

The protein resides in the cytoplasm. The enzyme catalyses tRNA(Cys) + L-cysteine + ATP = L-cysteinyl-tRNA(Cys) + AMP + diphosphate. The protein is Cysteine--tRNA ligase of Helicobacter pylori (strain G27).